Here is a 480-residue protein sequence, read N- to C-terminus: ATP synthase subunit beta 1 (480 aa).

154–161 (GGAGVGKT) provides a ligand contact to ATP.

The protein belongs to the ATPase alpha/beta chains family. F-type ATPases have 2 components, CF(1) - the catalytic core - and CF(0) - the membrane proton channel. CF(1) has five subunits: alpha(3), beta(3), gamma(1), delta(1), epsilon(1). CF(0) has four main subunits: a(1), b(1), b'(1) and c(9-12).

It is found in the cell inner membrane. The catalysed reaction is ATP + H2O + 4 H(+)(in) = ADP + phosphate + 5 H(+)(out). Produces ATP from ADP in the presence of a proton gradient across the membrane. The catalytic sites are hosted primarily by the beta subunits. In Bradyrhizobium sp. (strain BTAi1 / ATCC BAA-1182), this protein is ATP synthase subunit beta 1.